The following is a 72-amino-acid chain: Translation initiation factor IF-1 (72 aa).

Positions 1–72 (MSKDDVIEVE…TRGRIIYRHK (72 aa)) constitute an S1-like domain.

It belongs to the IF-1 family. Component of the 30S ribosomal translation pre-initiation complex which assembles on the 30S ribosome in the order IF-2 and IF-3, IF-1 and N-formylmethionyl-tRNA(fMet); mRNA recruitment can occur at any time during PIC assembly.

The protein resides in the cytoplasm. Functionally, one of the essential components for the initiation of protein synthesis. Stabilizes the binding of IF-2 and IF-3 on the 30S subunit to which N-formylmethionyl-tRNA(fMet) subsequently binds. Helps modulate mRNA selection, yielding the 30S pre-initiation complex (PIC). Upon addition of the 50S ribosomal subunit IF-1, IF-2 and IF-3 are released leaving the mature 70S translation initiation complex. The chain is Translation initiation factor IF-1 from Carboxydothermus hydrogenoformans (strain ATCC BAA-161 / DSM 6008 / Z-2901).